The sequence spans 125 residues: TSSK6-activating co-chaperone protein (125 aa).

2 disordered regions span residues 1 to 21 (MEQH…ANAV) and 97 to 125 (LAPG…QFSK). Residues 103-125 (SNNSSLPALSPNPLLNHLPQFSK) are compositionally biased toward low complexity.

The protein belongs to the TSACC family. Interacts with HSP70. Associates with HSP90. Interacts with TSSK6; this interaction is direct and recruits TSACC to HSP90.

In terms of biological role, co-chaperone that facilitates HSP-mediated activation of TSSK6. This Macaca fascicularis (Crab-eating macaque) protein is TSSK6-activating co-chaperone protein (TSACC).